Here is a 232-residue protein sequence, read N- to C-terminus: Phosphoribosylformylglycinamidine synthase subunit PurQ (232 aa).

The region spanning 2 to 232 (RIGVITFPGS…SVVRSTLVEA (231 aa)) is the Glutamine amidotransferase type-1 domain. The active-site Nucleophile is Cys85. Catalysis depends on residues His194 and Glu196.

As to quaternary structure, part of the FGAM synthase complex composed of 1 PurL, 1 PurQ and 2 PurS subunits.

Its subcellular location is the cytoplasm. The catalysed reaction is N(2)-formyl-N(1)-(5-phospho-beta-D-ribosyl)glycinamide + L-glutamine + ATP + H2O = 2-formamido-N(1)-(5-O-phospho-beta-D-ribosyl)acetamidine + L-glutamate + ADP + phosphate + H(+). It carries out the reaction L-glutamine + H2O = L-glutamate + NH4(+). It functions in the pathway purine metabolism; IMP biosynthesis via de novo pathway; 5-amino-1-(5-phospho-D-ribosyl)imidazole from N(2)-formyl-N(1)-(5-phospho-D-ribosyl)glycinamide: step 1/2. Functionally, part of the phosphoribosylformylglycinamidine synthase complex involved in the purines biosynthetic pathway. Catalyzes the ATP-dependent conversion of formylglycinamide ribonucleotide (FGAR) and glutamine to yield formylglycinamidine ribonucleotide (FGAM) and glutamate. The FGAM synthase complex is composed of three subunits. PurQ produces an ammonia molecule by converting glutamine to glutamate. PurL transfers the ammonia molecule to FGAR to form FGAM in an ATP-dependent manner. PurS interacts with PurQ and PurL and is thought to assist in the transfer of the ammonia molecule from PurQ to PurL. This is Phosphoribosylformylglycinamidine synthase subunit PurQ from Leifsonia xyli subsp. xyli (strain CTCB07).